Here is a 321-residue protein sequence, read N- to C-terminus: Carbonic anhydrase, chloroplastic (321 aa).

The N-terminal 100 residues, 1 to 100 (MSTASINSCL…AAARVDQITA (100 aa)), are a transit peptide targeting the chloroplast.

This sequence belongs to the beta-class carbonic anhydrase family. In terms of assembly, homohexamer.

Its subcellular location is the plastid. It is found in the chloroplast stroma. The catalysed reaction is hydrogencarbonate + H(+) = CO2 + H2O. Functionally, reversible hydration of carbon dioxide. The protein is Carbonic anhydrase, chloroplastic of Nicotiana tabacum (Common tobacco).